A 196-amino-acid chain; its full sequence is ATP-dependent Clp protease proteolytic subunit (196 aa).

Ser101 serves as the catalytic Nucleophile. The active site involves His126.

This sequence belongs to the peptidase S14 family. In terms of assembly, component of the chloroplastic Clp protease core complex.

It is found in the plastid. It localises to the chloroplast stroma. The catalysed reaction is Hydrolysis of proteins to small peptides in the presence of ATP and magnesium. alpha-casein is the usual test substrate. In the absence of ATP, only oligopeptides shorter than five residues are hydrolyzed (such as succinyl-Leu-Tyr-|-NHMec, and Leu-Tyr-Leu-|-Tyr-Trp, in which cleavage of the -Tyr-|-Leu- and -Tyr-|-Trp bonds also occurs).. Functionally, cleaves peptides in various proteins in a process that requires ATP hydrolysis. Has a chymotrypsin-like activity. Plays a major role in the degradation of misfolded proteins. This chain is ATP-dependent Clp protease proteolytic subunit, found in Pinus thunbergii (Japanese black pine).